The sequence spans 433 residues: C4-dicarboxylate transport protein (433 aa).

The next 8 membrane-spanning stretches (helical) occupy residues 8–28, 44–64, 78–98, 148–168, 188–208, 222–242, 307–327, and 355–375; these read ILYVQVLFAICIGILLGHFWP, LIKMIIGPIIFCTVVTGIAGM, LLYFEVVSTFALLIGLGAAHL, GDILQILLVSLFFGAALAVLG, IVHVITKVAPIGAFGAMAFTI, LIGTFYFTAIVFVLVVLGTIA, IYMTMAVIFIAQATGIELTLM, and AATLAVVPTIPVAGMVLILGI.

This sequence belongs to the dicarboxylate/amino acid:cation symporter (DAACS) (TC 2.A.23) family.

Its subcellular location is the cell inner membrane. Responsible for the transport of dicarboxylates such as succinate, fumarate, and malate from the periplasm across the membrane. This is C4-dicarboxylate transport protein from Cupriavidus taiwanensis (strain DSM 17343 / BCRC 17206 / CCUG 44338 / CIP 107171 / LMG 19424 / R1) (Ralstonia taiwanensis (strain LMG 19424)).